Reading from the N-terminus, the 349-residue chain is DNA replication and repair protein RecF (349 aa).

G30–T37 is a binding site for ATP.

The protein belongs to the RecF family.

It is found in the cytoplasm. Functionally, the RecF protein is involved in DNA metabolism; it is required for DNA replication and normal SOS inducibility. RecF binds preferentially to single-stranded, linear DNA. It also seems to bind ATP. This is DNA replication and repair protein RecF from Francisella tularensis subsp. novicida (strain U112).